The following is a 256-amino-acid chain: tRNA pseudouridine synthase A (256 aa).

The active-site Nucleophile is Asp55. Tyr113 provides a ligand contact to substrate.

Belongs to the tRNA pseudouridine synthase TruA family. Homodimer.

The enzyme catalyses uridine(38/39/40) in tRNA = pseudouridine(38/39/40) in tRNA. Formation of pseudouridine at positions 38, 39 and 40 in the anticodon stem and loop of transfer RNAs. This is tRNA pseudouridine synthase A from Limosilactobacillus reuteri (strain DSM 20016) (Lactobacillus reuteri).